The chain runs to 71 residues: Cytotoxic linear peptide IsCT2 (71 aa).

The signal sequence occupies residues 1-23 (MKTQFAILLVALVLFQMFAQSEA). Phe36 is modified (phenylalanine amide). A propeptide spanning residues 40-71 (ALNNDLDLDGLDELFDGEISQADVDFLKELMR) is cleaved from the precursor.

This sequence belongs to the non-disulfide-bridged peptide (NDBP) superfamily. Short antimicrobial peptide (group 4) family. Post-translationally, isCT2F is an enzymatic proteolytic cleavage product of IsCT2 by the proteases present in the venom. In terms of tissue distribution, expressed by the venom gland.

The protein localises to the secreted. Its subcellular location is the target cell membrane. Functionally, isCT2 shows weak hemolytic activity and antibacterial activity against both Gram-positive and Gram-negative bacteria probably by forming pores in the cell membrane. IsCT2 adopts an amphipathic alpha-helical structure. IsCT2f shows neither hemolytic, nor antibacterial activities, surely due to the fact that it cannot apply amphipathic alpha-helical structure. In Opisthacanthus madagascariensis (Scorpion), this protein is Cytotoxic linear peptide IsCT2.